The following is a 203-amino-acid chain: Guanylate kinase (203 aa).

In terms of domain architecture, Guanylate kinase-like spans 3-181; that stretch reads GTLYIVAAPS…AVSEMCAIFT (179 aa). Position 10–17 (10–17) interacts with ATP; that stretch reads APSGAGKS.

It belongs to the guanylate kinase family.

It is found in the cytoplasm. The catalysed reaction is GMP + ATP = GDP + ADP. In terms of biological role, essential for recycling GMP and indirectly, cGMP. This chain is Guanylate kinase, found in Xanthomonas campestris pv. campestris (strain 8004).